We begin with the raw amino-acid sequence, 337 residues long: Beta-glucosidase-like protein NCA3, mitochondrial (337 aa).

The span at 57–67 (ESAATTTTLSS) shows a compositional bias: low complexity. The tract at residues 57-84 (ESAATTTTLSSSEKDTSEQKRDGGFQDG) is disordered. Positions 68–80 (SEKDTSEQKRDGG) are enriched in basic and acidic residues.

It belongs to the SUN family.

It localises to the mitochondrion. In terms of biological role, involved in the mitochondrial expression of subunits 6 and 8 of the F0-F1 ATP synthase. The protein is Beta-glucosidase-like protein NCA3, mitochondrial (NCA3) of Saccharomyces cerevisiae (strain ATCC 204508 / S288c) (Baker's yeast).